An 88-amino-acid polypeptide reads, in one-letter code: Large ribosomal subunit protein bL27 (88 aa).

The segment at 1–20 is disordered; that stretch reads MASKKGVGSTKDGRDSIAKR.

The protein belongs to the bacterial ribosomal protein bL27 family.

The sequence is that of Large ribosomal subunit protein bL27 (rpmA) from Geobacillus stearothermophilus (Bacillus stearothermophilus).